Here is a 340-residue protein sequence, read N- to C-terminus: Guanine nucleotide-binding protein G(I)/G(S)/G(T) subunit beta-3 (340 aa).

WD repeat units lie at residues 53 to 83, 95 to 125, 141 to 170, 182 to 212, 224 to 254, 268 to 298, and 310 to 340; these read GHLAKIYAMHWATDSKLLVSASQDGKLIVWD, LRSSWVMTCAYAPSGNFVACGGLDNMCSIYN, AHTGYLSCCRFLDDNNIVTSSGDTTCALWD, GHTGDCMSLAVSPDFNLFISGACDASAKLWD, GHESDINAICFFPNGEAICTGSDDASCRLFD, SIICGITSVAFSLSGRLLFAGYDDFNCNVWD, and GHDNRVSCLGVTADGMAVATGSWDSFLKIWN.

Belongs to the WD repeat G protein beta family. In terms of assembly, g proteins are composed of 3 units, alpha, beta and gamma. Interacts with RASD2.

Guanine nucleotide-binding proteins (G proteins) are involved as a modulator or transducer in various transmembrane signaling systems. The beta and gamma chains are required for the GTPase activity, for replacement of GDP by GTP, and for G protein-effector interaction. This Homo sapiens (Human) protein is Guanine nucleotide-binding protein G(I)/G(S)/G(T) subunit beta-3 (GNB3).